Consider the following 149-residue polypeptide: MHCPFCSTEETKVIDSRLVSDGYQVRRRRECTKCHERFTTFETAELVVPKIIKNNGMREPFNEDKLRRGIQHALEKRPVSADDVEKAISHITHQLRATGEREVPSKLVGSLVMEELKKLDKVAYIRFASVYLSFENINEFSNEIEKLKD.

The segment at 3-34 (CPFCSTEETKVIDSRLVSDGYQVRRRRECTKC) is a zinc-finger region. An ATP-cone domain is found at 49 to 139 (PKIIKNNGMR…VYLSFENINE (91 aa)).

The protein belongs to the NrdR family. Zn(2+) serves as cofactor.

Its function is as follows. Negatively regulates transcription of bacterial ribonucleotide reductase nrd genes and operons by binding to NrdR-boxes. The chain is Transcriptional repressor NrdR from Mannheimia succiniciproducens (strain KCTC 0769BP / MBEL55E).